A 161-amino-acid polypeptide reads, in one-letter code: Ubiquitin-conjugating enzyme 15 (161 aa).

Residues 15-161 (IACNRLQKEL…TRWWFHDDKV (147 aa)) enclose the UBC core domain. Cys99 functions as the Glycyl thioester intermediate in the catalytic mechanism.

This sequence belongs to the ubiquitin-conjugating enzyme family.

It catalyses the reaction S-ubiquitinyl-[E1 ubiquitin-activating enzyme]-L-cysteine + [E2 ubiquitin-conjugating enzyme]-L-cysteine = [E1 ubiquitin-activating enzyme]-L-cysteine + S-ubiquitinyl-[E2 ubiquitin-conjugating enzyme]-L-cysteine.. The protein operates within protein modification; protein ubiquitination. Functionally, accepts the ubiquitin from the E1 complex and catalyzes its covalent attachment to other proteins. In Arabidopsis thaliana (Mouse-ear cress), this protein is Ubiquitin-conjugating enzyme 15 (UBC15).